The sequence spans 235 residues: Glycerol-3-phosphate acyltransferase (235 aa).

A run of 6 helical transmembrane segments spans residues 4 to 24 (LLAILAVSYIIGSIPTSLVAG), 56 to 76 (VVTLIDIVKGVVAAVSVVAFF), 94 to 114 (LLAGMSAVIGHVFTLFAGFKG), 122 to 142 (AGMLIGIAPVSMLMVVGIFLL), 152 to 172 (VASMLAAIAFPLIIAIRKYIF), and 191 to 211 (FHDSLDYHLMIFGLIVALAIL).

This sequence belongs to the PlsY family. Probably interacts with PlsX.

It localises to the cell inner membrane. The catalysed reaction is an acyl phosphate + sn-glycerol 3-phosphate = a 1-acyl-sn-glycero-3-phosphate + phosphate. The protein operates within lipid metabolism; phospholipid metabolism. Functionally, catalyzes the transfer of an acyl group from acyl-phosphate (acyl-PO(4)) to glycerol-3-phosphate (G3P) to form lysophosphatidic acid (LPA). This enzyme utilizes acyl-phosphate as fatty acyl donor, but not acyl-CoA or acyl-ACP. The protein is Glycerol-3-phosphate acyltransferase of Pelodictyon phaeoclathratiforme (strain DSM 5477 / BU-1).